The primary structure comprises 573 residues: L-lactate dehydrogenase (cytochrome) (573 aa).

The transit peptide at 1–73 (MFKSQLRTAT…LYQKDKFISA (73 aa)) directs the protein to the mitochondrion. The Cytochrome b5 heme-binding domain occupies 80–157 (DIELTPEIVS…PPEKHLGPLV (78 aa)). Residues His-115, His-138, and Tyr-208 each contribute to the heme b site. The region spanning 182–542 (PPLSQMINLH…TPELLDTRSI (361 aa)) is the FMN hydroxy acid dehydrogenase domain. Tyr-208 lines the pyruvate pocket. Residues 260–263 (SATA), Ser-290, and Gln-313 contribute to the FMN site. Residue Tyr-315 coordinates pyruvate. Thr-341 contributes to the FMN binding site. Lys-357 is a heme b binding site. Residue Lys-408 participates in FMN binding. Positions 432 and 435 each coordinate pyruvate. Residues 468–472 (DGGVR) and 491–492 (GR) each bind FMN.

This sequence in the N-terminal section; belongs to the cytochrome b5 family. In the C-terminal section; belongs to the FMN-dependent alpha-hydroxy acid dehydrogenase family. As to quaternary structure, homotetramer. FMN is required as a cofactor. The cofactor is heme b.

It localises to the mitochondrion intermembrane space. It carries out the reaction (S)-lactate + 2 Fe(III)-[cytochrome c] = 2 Fe(II)-[cytochrome c] + pyruvate + 2 H(+). In terms of biological role, catalyzes the oxidation of (S)-lactate (L-lactate) to pyruvate with subsequent transfer of electrons to cytochrome c. Is involved in the utilization of (S)-lactate as a sole source of carbon for growth. The protein is L-lactate dehydrogenase (cytochrome) (CYB2) of Wickerhamomyces anomalus (Yeast).